The following is a 121-amino-acid chain: MSSCSVSSLRRKRSEEVISFVVWFMPGESLLLNGNAESVLEVSSVTNVVDSFSFSKAGEVAGLNPSTTSAQYSFFNGFLGIFDFEVVYLYLCTNESDSDNIIRQKNLGRTMNCNNADDMLF.

This is an uncharacterized protein from Saccharomyces cerevisiae (strain ATCC 204508 / S288c) (Baker's yeast).